The following is a 328-amino-acid chain: Tetraacyldisaccharide 4'-kinase (328 aa).

55–62 (TAGGNGKT) is an ATP binding site.

It belongs to the LpxK family.

The enzyme catalyses a lipid A disaccharide + ATP = a lipid IVA + ADP + H(+). It participates in glycolipid biosynthesis; lipid IV(A) biosynthesis; lipid IV(A) from (3R)-3-hydroxytetradecanoyl-[acyl-carrier-protein] and UDP-N-acetyl-alpha-D-glucosamine: step 6/6. In terms of biological role, transfers the gamma-phosphate of ATP to the 4'-position of a tetraacyldisaccharide 1-phosphate intermediate (termed DS-1-P) to form tetraacyldisaccharide 1,4'-bis-phosphate (lipid IVA). The polypeptide is Tetraacyldisaccharide 4'-kinase (Escherichia coli O81 (strain ED1a)).